The primary structure comprises 307 residues: Protoheme IX farnesyltransferase (307 aa).

9 helical membrane passes run 31–51, 53–73, 103–123, 125–145, 153–173, 179–199, 223–243, 246–266, and 285–305; these read VTQL…PGMV, WPVL…AFAI, TLVF…VYAN, LTMW…TILL, IVIG…AVAG, AWFL…ALAL, LLHI…PFVY, SGYI…AYAW, and ILYL…KFVP.

Belongs to the UbiA prenyltransferase family. Protoheme IX farnesyltransferase subfamily.

Its subcellular location is the cell inner membrane. It catalyses the reaction heme b + (2E,6E)-farnesyl diphosphate + H2O = Fe(II)-heme o + diphosphate. It functions in the pathway porphyrin-containing compound metabolism; heme O biosynthesis; heme O from protoheme: step 1/1. Converts heme B (protoheme IX) to heme O by substitution of the vinyl group on carbon 2 of heme B porphyrin ring with a hydroxyethyl farnesyl side group. The sequence is that of Protoheme IX farnesyltransferase from Cupriavidus taiwanensis (strain DSM 17343 / BCRC 17206 / CCUG 44338 / CIP 107171 / LMG 19424 / R1) (Ralstonia taiwanensis (strain LMG 19424)).